A 243-amino-acid chain; its full sequence is UPF0246 protein MGAS10750_Spy1880 (243 aa).

It belongs to the UPF0246 family.

The protein is UPF0246 protein MGAS10750_Spy1880 of Streptococcus pyogenes serotype M4 (strain MGAS10750).